The chain runs to 72 residues: Conotoxin im23a (72 aa).

The signal sequence occupies residues 1 to 22 (MIMRMTLTLFVLVVMTAASASG). A propeptide spanning residues 23-28 (DALTEA) is cleaved from the precursor. Cystine bridges form between Cys-34–Cys-41, Cys-45–Cys-55, and Cys-56–Cys-71.

Belongs to the conotoxin K superfamily. Expressed by the venom duct.

It localises to the secreted. Functionally, neurotoxin that induces excitatory symptoms in mice following intracranial administration. No symptoms are observed after intraperitoneal and intravenous (tail vein) injections. This Conus imperialis (Imperial cone) protein is Conotoxin im23a.